We begin with the raw amino-acid sequence, 283 residues long: NAD kinase (283 aa).

Aspartate 68 acts as the Proton acceptor in catalysis. Residues 68–69, 142–143, arginine 153, aspartate 172, 183–188, and glutamine 242 contribute to the NAD(+) site; these read DG, ND, and TAYSLS.

Belongs to the NAD kinase family. The cofactor is a divalent metal cation.

It is found in the cytoplasm. It catalyses the reaction NAD(+) + ATP = ADP + NADP(+) + H(+). In terms of biological role, involved in the regulation of the intracellular balance of NAD and NADP, and is a key enzyme in the biosynthesis of NADP. Catalyzes specifically the phosphorylation on 2'-hydroxyl of the adenosine moiety of NAD to yield NADP. The chain is NAD kinase from Caldanaerobacter subterraneus subsp. tengcongensis (strain DSM 15242 / JCM 11007 / NBRC 100824 / MB4) (Thermoanaerobacter tengcongensis).